A 173-amino-acid polypeptide reads, in one-letter code: NADH-ubiquinone oxidoreductase chain 6 (173 aa).

5 helical membrane-spanning segments follow: residues 1-21 (MTYF…AVAS), 27-47 (YGVV…LSLG), 48-68 (VSFV…VVFV), 87-107 (VVGY…IGGF), and 139-159 (CGVG…FVVL).

The protein belongs to the complex I subunit 6 family.

Its subcellular location is the mitochondrion membrane. It carries out the reaction a ubiquinone + NADH + 5 H(+)(in) = a ubiquinol + NAD(+) + 4 H(+)(out). Functionally, core subunit of the mitochondrial membrane respiratory chain NADH dehydrogenase (Complex I) that is believed to belong to the minimal assembly required for catalysis. Complex I functions in the transfer of electrons from NADH to the respiratory chain. The immediate electron acceptor for the enzyme is believed to be ubiquinone. The polypeptide is NADH-ubiquinone oxidoreductase chain 6 (MT-ND6) (Cepphus columba (Pigeon guillemot)).